The chain runs to 359 residues: MAPNGTASSFCLDSTACKITITVVLAVLILITVAGNVVVCLAVGLNRRLRNLTNCFIVSLAITDLLLGLLVLPFSAIYQLSCKWSFGKVFCNIYTSLDVMLCTASILNLFMISLDRYCAVMDPLRYPVLVTPVRVAISLVLIWVISITLSFLSIHLGWNSRNETSKGNHTTSKCKVQVNEVYGLVDGLVTFYLPLLIMCITYYRIFKVARDQAKRINHISSWKAATIREHKATVTLAAVMGAFIICWFPYFTAFVYRGLRGDDAINEVLEAIVLWLGYANSALNPILYAALNRDFRTGYQQLFCCRLANRNSHKTSLRSNASQLSRTQSREPRQQEEKPLKLQVWSGTEVTAPQGATDR.

Topologically, residues 1 to 22 (MAPNGTASSFCLDSTACKITIT) are extracellular. N-linked (GlcNAc...) asparagine glycosylation is present at N4. The chain crosses the membrane as a helical span at residues 23–44 (VVLAVLILITVAGNVVVCLAVG). At 45–57 (LNRRLRNLTNCFI) the chain is on the cytoplasmic side. The chain crosses the membrane as a helical span at residues 58–81 (VSLAITDLLLGLLVLPFSAIYQLS). The Extracellular segment spans residues 82 to 92 (CKWSFGKVFCN). Residues C91 and C174 are joined by a disulfide bond. Residues 93–114 (IYTSLDVMLCTASILNLFMISL) form a helical membrane-spanning segment. Over 115–134 (DRYCAVMDPLRYPVLVTPVR) the chain is Cytoplasmic. Residues 135–159 (VAISLVLIWVISITLSFLSIHLGWN) traverse the membrane as a helical segment. Topologically, residues 160 to 180 (SRNETSKGNHTTSKCKVQVNE) are extracellular. Residues 181-204 (VYGLVDGLVTFYLPLLIMCITYYR) traverse the membrane as a helical segment. Residues 205–234 (IFKVARDQAKRINHISSWKAATIREHKATV) are Cytoplasmic-facing. Residues 235-258 (TLAAVMGAFIICWFPYFTAFVYRG) traverse the membrane as a helical segment. Over 259–267 (LRGDDAINE) the chain is Extracellular. Residues 268–289 (VLEAIVLWLGYANSALNPILYA) form a helical membrane-spanning segment. At 290–359 (ALNRDFRTGY…VTAPQGATDR (70 aa)) the chain is on the cytoplasmic side. The S-palmitoyl cysteine moiety is linked to residue C305. The interval 316-340 (SLRSNASQLSRTQSREPRQQEEKPL) is disordered. Over residues 317 to 327 (LRSNASQLSRT) the composition is skewed to polar residues. The span at 328–340 (QSREPRQQEEKPL) shows a compositional bias: basic and acidic residues.

It belongs to the G-protein coupled receptor 1 family.

It localises to the cell membrane. The H2 subclass of histamine receptors mediates gastric acid secretion. Also appears to regulate gastrointestinal motility and intestinal secretion. Possible role in regulating cell growth and differentiation. The activity of this receptor is mediated by G proteins which activate adenylyl cyclase and, through a separate G protein-dependent mechanism, the phosphoinositide/protein kinase (PKC) signaling pathway. The protein is Histamine H2 receptor (HRH2) of Gorilla gorilla gorilla (Western lowland gorilla).